We begin with the raw amino-acid sequence, 254 residues long: Large ribosomal subunit protein uL2 (254 aa).

This sequence belongs to the universal ribosomal protein uL2 family.

This chain is Large ribosomal subunit protein uL2 (RPL2), found in Eremothecium gossypii (strain ATCC 10895 / CBS 109.51 / FGSC 9923 / NRRL Y-1056) (Yeast).